The sequence spans 633 residues: Biosynthetic arginine decarboxylase (633 aa).

N6-(pyridoxal phosphate)lysine is present on lysine 101. 284–294 (VDVGGGLGVDY) provides a ligand contact to substrate.

This sequence belongs to the Orn/Lys/Arg decarboxylase class-II family. SpeA subfamily. Mg(2+) is required as a cofactor. It depends on pyridoxal 5'-phosphate as a cofactor.

It carries out the reaction L-arginine + H(+) = agmatine + CO2. The protein operates within amine and polyamine biosynthesis; agmatine biosynthesis; agmatine from L-arginine: step 1/1. Catalyzes the biosynthesis of agmatine from arginine. This chain is Biosynthetic arginine decarboxylase, found in Aeromonas salmonicida (strain A449).